The following is a 206-amino-acid chain: MIVVILVCIFLANGIKATAVQNDLHEHPVLTWDLLQHFIGHTLYITTHQVLALPLGSRVECEGIEGFNCTWPGFQDPAHDHIDFYFDLSNPFYSFVDNFYIVSEGNQRINLRLVGAVPKQKRLNVGCHTSFAVDLPFGIQIYHDRDFQHPVDGRHLDCTHRVYFVKYCPHNLHGYCFNERLKVYDLKQFRSKKVFDKINQHHKTEL.

The signal sequence occupies residues 1-17 (MIVVILVCIFLANGIKA).

The protein is Non-structural protein 7b of Feline coronavirus (strain FIPV WSU-79/1146) (FCoV).